A 219-amino-acid chain; its full sequence is Thiopurine S-methyltransferase (219 aa).

Positions 10, 45, 66, and 123 each coordinate S-adenosyl-L-methionine.

The protein belongs to the class I-like SAM-binding methyltransferase superfamily. TPMT family.

The protein resides in the cytoplasm. It carries out the reaction S-adenosyl-L-methionine + a thiopurine = S-adenosyl-L-homocysteine + a thiopurine S-methylether.. The polypeptide is Thiopurine S-methyltransferase (Bordetella pertussis (strain Tohama I / ATCC BAA-589 / NCTC 13251)).